The primary structure comprises 318 residues: MLHLIYISIIVVLIIILISYTRKPKYFRITAPRSVALFHGIHPLKPKNYKTFSEEFETILNNAIEDGDFKGQLTEPCSYALRGGKYIRPIILMEIVRACQLQHSFGAPIYPAEAALAVEYFHVASLIIDDMPSFDNDVKRRNKDTVWARFGVAKAQMSALALTMQGFQNICRQIDWIKEHCPRFPDPNQLGALLCTFVSHSLNSAGSGQLVDTPEKTIPFFKIAFIMGWVLGTGTIEDIGMIERAAHCFGNAFQLADDIKDHDTDTGWNYAKIHGKRKTFDDVAQSLQECKKILHGKKIYTSIWNEIFQKVINVALGT.

Residues 1 to 21 (MLHLIYISIIVVLIIILISYT) traverse the membrane as a helical segment. Isopentenyl diphosphate-binding residues include Lys-85, Arg-88, and His-122. Residues Asp-129 and Asp-135 each contribute to the Mg(2+) site. Arg-140 contributes to the dimethylallyl diphosphate binding site. Isopentenyl diphosphate is bound at residue Arg-141. Dimethylallyl diphosphate contacts are provided by Lys-216, Thr-217, and Gln-254.

Belongs to the FPP/GGPP synthase family. Asfivirus trans-prenyltransferase subfamily. Mg(2+) is required as a cofactor.

Its subcellular location is the host endoplasmic reticulum. The protein resides in the host membrane. The enzyme catalyses isopentenyl diphosphate + dimethylallyl diphosphate = (2E)-geranyl diphosphate + diphosphate. The catalysed reaction is isopentenyl diphosphate + (2E)-geranyl diphosphate = (2E,6E)-farnesyl diphosphate + diphosphate. It catalyses the reaction isopentenyl diphosphate + (2E,6E)-farnesyl diphosphate = (2E,6E,10E)-geranylgeranyl diphosphate + diphosphate. It carries out the reaction isopentenyl diphosphate + (2E,6E,10E)-geranylgeranyl diphosphate = (2E,6E,10E,14E)-geranylfarnesyl diphosphate + diphosphate. It participates in isoprenoid biosynthesis; farnesyl diphosphate biosynthesis; farnesyl diphosphate from geranyl diphosphate and isopentenyl diphosphate: step 1/1. Its pathway is isoprenoid biosynthesis; geranyl diphosphate biosynthesis; geranyl diphosphate from dimethylallyl diphosphate and isopentenyl diphosphate: step 1/1. The protein operates within isoprenoid biosynthesis; geranylgeranyl diphosphate biosynthesis; geranylgeranyl diphosphate from farnesyl diphosphate and isopentenyl diphosphate: step 1/1. In terms of biological role, trans-prenyltransferase that catalyzes the sequential condensation of isopentenyl diphosphate (IPP) with different allylic diphosphates, such as dimethylallyl diphosphate (DMAPP), geranyl diphosphate (GPP), farnesyl diphosphate (FPP) and geranylgeranyl diphosphate (GGPP), farnesyl diphosphate being the best allylic substrate. The polypeptide is Trans-prenyltransferase (African swine fever virus (isolate Tick/South Africa/Pretoriuskop Pr4/1996) (ASFV)).